The following is a 230-amino-acid chain: Somatolactin (230 aa).

An N-terminal signal peptide occupies residues 1–23 (MMTAVKQSGVWAVLLWPYLLAVS). Disulfide bonds link Cys28–Cys38, Cys88–Cys204, and Cys221–Cys229. Residues Asn34 and Asn144 are each glycosylated (N-linked (GlcNAc...) asparagine).

The protein belongs to the somatotropin/prolactin family. Pituitary gland.

The protein localises to the secreted. This chain is Somatolactin, found in Solea senegalensis (Senegalese sole).